The chain runs to 310 residues: Homoserine kinase (310 aa).

Residue proline 91 to cysteine 101 participates in ATP binding.

The protein belongs to the GHMP kinase family. Homoserine kinase subfamily.

It is found in the cytoplasm. It catalyses the reaction L-homoserine + ATP = O-phospho-L-homoserine + ADP + H(+). The protein operates within amino-acid biosynthesis; L-threonine biosynthesis; L-threonine from L-aspartate: step 4/5. In terms of biological role, catalyzes the ATP-dependent phosphorylation of L-homoserine to L-homoserine phosphate. This chain is Homoserine kinase, found in Sodalis glossinidius (strain morsitans).